Reading from the N-terminus, the 205-residue chain is Small ribosomal subunit protein uS4 (205 aa).

An S4 RNA-binding domain is found at Ser94 to Asn154.

Belongs to the universal ribosomal protein uS4 family. As to quaternary structure, part of the 30S ribosomal subunit. Contacts protein S5. The interaction surface between S4 and S5 is involved in control of translational fidelity.

In terms of biological role, one of the primary rRNA binding proteins, it binds directly to 16S rRNA where it nucleates assembly of the body of the 30S subunit. Its function is as follows. With S5 and S12 plays an important role in translational accuracy. This Mesomycoplasma hyopneumoniae (strain 232) (Mycoplasma hyopneumoniae) protein is Small ribosomal subunit protein uS4.